The sequence spans 381 residues: uncharacterized protein (381 aa).

A disordered region spans residues 176–292 (HAAGKIKKSK…EPMVDETPQN (117 aa)). Over residues 177 to 186 (AAGKIKKSKN) the composition is skewed to basic residues. The span at 187–212 (QKKDGTLSRPLGKKENKSVVKVKIEE) shows a compositional bias: basic and acidic residues. Acidic residues predominate over residues 276–286 (DEEDEDEEPMV).

This is an uncharacterized protein from Caenorhabditis elegans.